Reading from the N-terminus, the 669-residue chain is uncharacterized protein (669 aa).

A run of 12 helical transmembrane segments spans residues 9–29 (PLVI…IFIA), 48–68 (FSWF…ILSV), 87–107 (FLSW…MFFG), 139–159 (WGIH…YFGF), 186–206 (AIDV…LGFG), 224–244 (SFAL…FSAI), 259–279 (LTLA…LYLL), 314–334 (WTVL…LFIA), 345–365 (FIFG…TVFG), 397–417 (YLPL…LFFI), 444–464 (AIMW…SGGL), and 470–490 (MTLI…FSLW).

It belongs to the BCCT transporter (TC 2.A.15) family.

It is found in the cell inner membrane. This is an uncharacterized protein from Haemophilus influenzae (strain ATCC 51907 / DSM 11121 / KW20 / Rd).